Here is a 474-residue protein sequence, read N- to C-terminus: MIKLTIAIATCLVLCLVLLLPSSNISYRHKYDLPTNGLNDSEQQSEKLLGGLLATGFEEKSCLSRYDQSMSKPSPYKPSRHIVSKLRSYEMLHKRCGPGTKAYKRATKQLGHNELSSSGDECRYVVWMPMFGLGNRMLSLVSVFLYALLTDRVMLVDQRNDITDLFCEPFPETSWLLPLDFPLNDQLDSFNREHSRCYGTMLKNHGINSTSIIPSHLYLDIFHDSRDHDKKFFCEEDQAFLDKVTWLVVKSNLYFVPSLWMIPSFQTKLIKLFPQKETVFHHLARYLFHPTNQVWGMVTRSYNAYLSRADERLGIQVRVFSKPVGYFQHVMDQILYSDHLKNMFLEQASSTGETIEVYQPSGEKIQQTDKKLHDQKALAEIYLLSLTDELVTSTRSTFGYVAQGLGGLKPWILYEPRDKKTPNPPCVRAMSMEPCFLRAPLHGCQAKTIKIPPFVRICEDWKTGLKLVDVSDEL.

The chain crosses the membrane as a helical; Signal-anchor for type II membrane protein span at residues methionine 1–proline 21. At serine 22–leucine 474 the chain is on the lumenal side. Residues asparagine 24, asparagine 39, and asparagine 208 are each glycosylated (N-linked (GlcNAc...) asparagine).

It belongs to the glycosyltransferase 37 family. In terms of tissue distribution, expressed in leaves and stems.

The protein localises to the golgi apparatus. It is found in the golgi stack membrane. It functions in the pathway protein modification; protein glycosylation. Its function is as follows. May be involved in cell wall biosynthesis. May act as a fucosyltransferase. This is Probable fucosyltransferase 9 (FUT9) from Arabidopsis thaliana (Mouse-ear cress).